Here is a 906-residue protein sequence, read N- to C-terminus: Protein translocase subunit SecA (906 aa).

Residues Q86, G104–T108, and D499 contribute to the ATP site. The tract at residues P863–N887 is disordered. Positions 890, 892, 901, and 902 each coordinate Zn(2+).

It belongs to the SecA family. Monomer and homodimer. Part of the essential Sec protein translocation apparatus which comprises SecA, SecYEG and auxiliary proteins SecDF-YajC and YidC. It depends on Zn(2+) as a cofactor.

Its subcellular location is the cell inner membrane. It is found in the cytoplasm. The enzyme catalyses ATP + H2O + cellular proteinSide 1 = ADP + phosphate + cellular proteinSide 2.. Functionally, part of the Sec protein translocase complex. Interacts with the SecYEG preprotein conducting channel. Has a central role in coupling the hydrolysis of ATP to the transfer of proteins into and across the cell membrane, serving both as a receptor for the preprotein-SecB complex and as an ATP-driven molecular motor driving the stepwise translocation of polypeptide chains across the membrane. This chain is Protein translocase subunit SecA, found in Rickettsia rickettsii (strain Iowa).